The primary structure comprises 175 residues: Inorganic pyrophosphatase (175 aa).

The substrate site is built by K30, R44, and Y56. The Mg(2+) site is built by D66, D71, and D103. Position 140 (Y140) interacts with substrate.

It belongs to the PPase family. As to quaternary structure, homohexamer. Mg(2+) is required as a cofactor.

Its subcellular location is the cytoplasm. The enzyme catalyses diphosphate + H2O = 2 phosphate + H(+). Catalyzes the hydrolysis of inorganic pyrophosphate (PPi) forming two phosphate ions. This chain is Inorganic pyrophosphatase, found in Thermus thermophilus (strain ATCC 27634 / DSM 579 / HB8).